The chain runs to 429 residues: UPF0597 protein AHA_1619 (429 aa).

This sequence belongs to the UPF0597 family.

The chain is UPF0597 protein AHA_1619 from Aeromonas hydrophila subsp. hydrophila (strain ATCC 7966 / DSM 30187 / BCRC 13018 / CCUG 14551 / JCM 1027 / KCTC 2358 / NCIMB 9240 / NCTC 8049).